The primary structure comprises 117 residues: Large ribosomal subunit protein uL18 (117 aa).

Belongs to the universal ribosomal protein uL18 family. As to quaternary structure, part of the 50S ribosomal subunit; part of the 5S rRNA/L5/L18/L25 subcomplex. Contacts the 5S and 23S rRNAs.

In terms of biological role, this is one of the proteins that bind and probably mediate the attachment of the 5S RNA into the large ribosomal subunit, where it forms part of the central protuberance. The sequence is that of Large ribosomal subunit protein uL18 from Methylobacillus flagellatus (strain ATCC 51484 / DSM 6875 / VKM B-1610 / KT).